The chain runs to 250 residues: MSNRTPPEQLTDRLFATERNPEDFRFDASVARVFPDMIRRSVPGYTTIIPMIEVITEQYVQPGSHCYDLGCSLGASTLAMRHGIPYPDCTLVGVDNSEAMIERCEHYVALDDHDLPVTLRCEDILSTELSNASVTTLNFTLQFVPPEQRLALLTRIGDATLPGGVLVLSEKIRFESDAEQAIQTRLHHEFKRANGYSDLEISQKRAAIEKVLIPETLADHRDRLQRAGFDQVLVWYQCFNFVSMLAIKNS.

S-adenosyl-L-methionine-binding positions include Tyr-45, 70 to 72 (GCS), 95 to 96 (DN), 123 to 124 (DI), Asn-138, and Arg-205.

This sequence belongs to the class I-like SAM-binding methyltransferase superfamily. Cx-SAM synthase family. As to quaternary structure, homodimer.

The catalysed reaction is prephenate + S-adenosyl-L-methionine = carboxy-S-adenosyl-L-methionine + 3-phenylpyruvate + H2O. Catalyzes the conversion of S-adenosyl-L-methionine (SAM) to carboxy-S-adenosyl-L-methionine (Cx-SAM). This Marinobacter nauticus (strain ATCC 700491 / DSM 11845 / VT8) (Marinobacter aquaeolei) protein is Carboxy-S-adenosyl-L-methionine synthase.